The following is a 422-amino-acid chain: Histidine--tRNA ligase (422 aa).

Belongs to the class-II aminoacyl-tRNA synthetase family. In terms of assembly, homodimer.

It localises to the cytoplasm. It catalyses the reaction tRNA(His) + L-histidine + ATP = L-histidyl-tRNA(His) + AMP + diphosphate + H(+). This is Histidine--tRNA ligase from Prosthecochloris aestuarii (strain DSM 271 / SK 413).